Reading from the N-terminus, the 620-residue chain is UvrABC system protein C (620 aa).

The 80-residue stretch at Asp13–Ile92 folds into the GIY-YIG domain. One can recognise a UVR domain in the interval Thr204–Ile239.

This sequence belongs to the UvrC family. Interacts with UvrB in an incision complex.

Its subcellular location is the cytoplasm. Functionally, the UvrABC repair system catalyzes the recognition and processing of DNA lesions. UvrC both incises the 5' and 3' sides of the lesion. The N-terminal half is responsible for the 3' incision and the C-terminal half is responsible for the 5' incision. The chain is UvrABC system protein C from Clostridium perfringens (strain 13 / Type A).